The following is a 587-amino-acid chain: ASI1-immunoprecipitated protein 3 (587 aa).

The disordered stretch occupies residues 1–118 (MVLSRRFAQV…NVTGKGKGKR (118 aa)). Residues 66 to 98 (EDEDMAEGDDDQAEEETNPEAEEEEDEEEEEKP) show a composition bias toward acidic residues. A BAH domain is found at 129-248 (NTYDLEVPVL…TVEKKLWKLT (120 aa)). Residues 344-493 (HRDKCLGKLL…RMQMTSVRCS (150 aa)) form the TFIIS central domain. Disordered regions lie at residues 371–396 (EAKV…GKDE) and 539–587 (TDKP…KKPE). Residues 560–570 (ETNKPKDEALK) show a composition bias toward basic and acidic residues. Polar residues predominate over residues 571-581 (TNDSNADNNPE).

Interacts with MOM1. Component of the ASI1-AIPP1-EDM2 (AAE) RNA regulatory complex composed of at least AIPP1/EDM3, ASI1 and EDM2 and may contain CPL2, AIPP2 and AIPP3/BDT1. Part of the BAH-PHD bivalent histone reader complex that contains AIPP2, PAIPP2 and AIPP3/BDT1; the BAH-PHD module associates with CPL2 to form the BAH-PHD-CPL2 complex (BPC) for transcriptional repression. Binds directly to CPL2, PHD1, PAIPP2/PHD2, AIPP2/PHD3, PHD4, PHD5 and PHD6. Expressed ubiquitously.

The protein resides in the nucleus. Transcriptional repressor. Together with PHD finger-containing proteins (e.g. PHD1, PAIPP2/PHD2, AIPP2/PHD3, PHD4, PHD5 and PHD6), cooperates to form a BAH-PHD bivalent histone reader complex able to read histone H3 lysine 27 trimethylation (H3K27me3) and low-methylated H3K4 histone marks in order to regulate transcription, especially to prevent early flowering; H3K27me3 reader of this complex. CPL2 is subsequently recruited to form a BAH-PHD-CPL2 complex (BPC) in order to silence several H3K27me3 and low-methylated H3K4 enriched loci, including AGO5, via the phosphorylation state-dependent inhibition of Pol II release from the transcriptional start site (e.g. Ser5P-Pol II dephosphorylation). The BPC complex represses flowering by inhibiting the expression of several genes, including AGL6, FT, FUL and SOC1. Prevents the accumulation of intronic heterochromatin-containing genes (e.g. IBM1, At3g05410 and RPP7). Seems to not be involved in vernalization establishment, by contrast to orthologs in grass plants. The polypeptide is ASI1-immunoprecipitated protein 3 (Arabidopsis thaliana (Mouse-ear cress)).